Consider the following 575-residue polypeptide: Sulfite reductase [NADPH] hemoprotein beta-component (575 aa).

Positions 440, 446, 485, and 489 each coordinate [4Fe-4S] cluster. Cysteine 489 provides a ligand contact to siroheme.

It belongs to the nitrite and sulfite reductase 4Fe-4S domain family. As to quaternary structure, alpha(8)-beta(8). The alpha component is a flavoprotein, the beta component is a hemoprotein. Siroheme serves as cofactor. The cofactor is [4Fe-4S] cluster.

It catalyses the reaction hydrogen sulfide + 3 NADP(+) + 3 H2O = sulfite + 3 NADPH + 4 H(+). Its pathway is sulfur metabolism; hydrogen sulfide biosynthesis; hydrogen sulfide from sulfite (NADPH route): step 1/1. Component of the sulfite reductase complex that catalyzes the 6-electron reduction of sulfite to sulfide. This is one of several activities required for the biosynthesis of L-cysteine from sulfate. This is Sulfite reductase [NADPH] hemoprotein beta-component from Chromohalobacter salexigens (strain ATCC BAA-138 / DSM 3043 / CIP 106854 / NCIMB 13768 / 1H11).